A 414-amino-acid chain; its full sequence is Cytochrome b (414 aa).

The next 2 membrane-spanning stretches (helical) occupy residues 40–60 (FFGS…VWLA) and 84–104 (GWLI…VIYL). The heme b site is built by histidine 91 and histidine 105. Helical transmembrane passes span 121-141 (LLWM…FFGY), 154-174 (QVIV…SVWV), 188-208 (FFAF…LHIV), 252-272 (LMGV…NPTM), 294-314 (IAPV…PPMY), 317-337 (QFPG…LPWL), 351-371 (IFKW…WLGI), and 378-398 (YTLL…LMPI). Heme b-binding residues include histidine 192 and histidine 206.

It belongs to the cytochrome b family. The main subunits of complex b-c1 are: cytochrome b, cytochrome c1 and the Rieske protein. It depends on heme b as a cofactor.

It is found in the cell membrane. Its function is as follows. Component of the ubiquinol-cytochrome c reductase complex (complex III or cytochrome b-c1 complex), which is a respiratory chain that generates an electrochemical potential coupled to ATP synthesis. The polypeptide is Cytochrome b (petB) (Allochromatium vinosum (strain ATCC 17899 / DSM 180 / NBRC 103801 / NCIMB 10441 / D) (Chromatium vinosum)).